The following is a 150-amino-acid chain: SKP1-like protein 17 (150 aa).

Residues 92–150 (LDAADYLIVIGLKNLIAQAIADYTADKTVNEIRELFNIENDYTPEEEEELRKKNEWAFN) are interaction with the F-box domain of F-box proteins.

Belongs to the SKP1 family. Part of a SCF (SKP1-cullin-F-box) protein ligase complex. Interacts with CPR1/CPR30. In terms of tissue distribution, mainly detected in the siliques.

It localises to the nucleus. It participates in protein modification; protein ubiquitination. Involved in ubiquitination and subsequent proteasomal degradation of target proteins. Together with CUL1, RBX1 and a F-box protein, it forms a SCF E3 ubiquitin ligase complex. The functional specificity of this complex depends on the type of F-box protein. In the SCF complex, it serves as an adapter that links the F-box protein to CUL1. Probably implicated in incompatibility response after hybridization. The protein is SKP1-like protein 17 (ASK17) of Arabidopsis thaliana (Mouse-ear cress).